Here is a 132-residue protein sequence, read N- to C-terminus: Ribosome-binding factor A (132 aa).

A disordered region spans residues 113-132 (EANSTRAKDDDEADAPAKDD).

Belongs to the RbfA family. In terms of assembly, monomer. Binds 30S ribosomal subunits, but not 50S ribosomal subunits or 70S ribosomes.

The protein localises to the cytoplasm. Its function is as follows. One of several proteins that assist in the late maturation steps of the functional core of the 30S ribosomal subunit. Associates with free 30S ribosomal subunits (but not with 30S subunits that are part of 70S ribosomes or polysomes). Required for efficient processing of 16S rRNA. May interact with the 5'-terminal helix region of 16S rRNA. This is Ribosome-binding factor A from Burkholderia ambifaria (strain MC40-6).